The chain runs to 450 residues: MSRRYFGTDGIRGRANGLITPELALKVGQAAGLVFQRGDHRHRVVIGKDTRLSGYMIENAMVAGFTSVGMDVLLVGPMPTPAVAMLTKSMRADLGVMISASHNMFEDNGIKLFGPLGFKLSDDVEKQIELLLDESLDKKLAASASLGRARRIDGVHDRYIEFAKRTLPRDLSLDGLRVVVDCANGAAYKVVPEALWELGADVISIGVEPDGFNINKECGSTAPEALCRKVREMRADIGIALDGDADRVIMVDERGHVVDGDQLLAVIAQSWKEDGRLAKPGVVATVMSNLGLERFLAAEGIDLVRTSVGDRYVLEQMMKGGYNVGGEASGHIILSDYNTTGDGFVAALQVLAVVQKLRRPVSEVCHRFDPLPQILKNVRYRNGRPLDDAGVQSAIHAGETRLNGHGRLLIRASGTEPVIRVMGEGEDRIMVEEVVDVIVDALGSASAAAA.

Serine 101 acts as the Phosphoserine intermediate in catalysis. Mg(2+) is bound by residues serine 101, aspartate 242, aspartate 244, and aspartate 246. Serine 101 is subject to Phosphoserine.

This sequence belongs to the phosphohexose mutase family. It depends on Mg(2+) as a cofactor. In terms of processing, activated by phosphorylation.

The catalysed reaction is alpha-D-glucosamine 1-phosphate = D-glucosamine 6-phosphate. Catalyzes the conversion of glucosamine-6-phosphate to glucosamine-1-phosphate. This chain is Phosphoglucosamine mutase, found in Rhodopseudomonas palustris (strain BisB5).